Here is an 865-residue protein sequence, read N- to C-terminus: Protein translocase subunit SecA (865 aa).

ATP contacts are provided by residues Gln-93, 111-115 (GEGKT), and Asp-501. 4 residues coordinate Zn(2+): Cys-841, Cys-843, Cys-852, and Cys-853.

This sequence belongs to the SecA family. In terms of assembly, monomer and homodimer. Part of the essential Sec protein translocation apparatus which comprises SecA, SecYEG and auxiliary proteins SecDF-YajC and YidC. It depends on Zn(2+) as a cofactor.

Its subcellular location is the cell inner membrane. It localises to the cytoplasm. It carries out the reaction ATP + H2O + cellular proteinSide 1 = ADP + phosphate + cellular proteinSide 2.. Its function is as follows. Part of the Sec protein translocase complex. Interacts with the SecYEG preprotein conducting channel. Has a central role in coupling the hydrolysis of ATP to the transfer of proteins into and across the cell membrane, serving as an ATP-driven molecular motor driving the stepwise translocation of polypeptide chains across the membrane. In Helicobacter pylori (strain G27), this protein is Protein translocase subunit SecA.